Here is a 409-residue protein sequence, read N- to C-terminus: Transcription termination factor 3, mitochondrial (409 aa).

The N-terminal 64 residues, 1–64, are a transit peptide targeting the mitochondrion; that stretch reads MALLAQQLSR…KTDRALFSWS (64 aa). The interval 74 to 93 is disordered; the sequence is RKSSTNSTLLPSVSEQPEKI.

This sequence belongs to the mTERF family.

Its subcellular location is the mitochondrion. In terms of biological role, binds promoter DNA and regulates initiation of transcription. Required for normal mitochondrial transcription and translation, and for normal assembly of mitochondrial respiratory complexes. Required for normal mitochondrial function. Maintains 16S rRNA levels and functions in mitochondrial ribosome assembly by regulating the biogenesis of the 39S ribosomal subunit. The protein is Transcription termination factor 3, mitochondrial (Mterf3) of Rattus norvegicus (Rat).